Reading from the N-terminus, the 105-residue chain is Iron-sulfur cluster assembly protein CyaY (105 aa).

The protein belongs to the frataxin family.

Its function is as follows. Involved in iron-sulfur (Fe-S) cluster assembly. May act as a regulator of Fe-S biogenesis. The sequence is that of Iron-sulfur cluster assembly protein CyaY from Paraburkholderia phymatum (strain DSM 17167 / CIP 108236 / LMG 21445 / STM815) (Burkholderia phymatum).